The primary structure comprises 201 residues: UPF0056 membrane protein PYRAB13050 (201 aa).

6 helical membrane-spanning segments follow: residues Phe8–Phe28, Ile49–Phe69, Val73–Ser93, Val111–Met131, Pro140–Gly160, and Leu181–Ile201.

Belongs to the UPF0056 (MarC) family.

It localises to the cell membrane. The chain is UPF0056 membrane protein PYRAB13050 from Pyrococcus abyssi (strain GE5 / Orsay).